The sequence spans 517 residues: DNA-(apurinic or apyrimidinic site) endonuclease 2 (517 aa).

The Mg(2+) site is built by N9 and E34. Residues 82-90 carry the Claspin-like CKB motif motif; that stretch reads EEGLSGVFC. Residue Y142 is part of the active site. Mg(2+) contacts are provided by D183, N185, D299, and H300. D183 serves as the catalytic Proton donor/acceptor. Residue H300 is the Proton acceptor of the active site. A compositionally biased stretch (polar residues) spans 347 to 362; the sequence is GNTTEESSELTGTPSF. The tract at residues 347 to 366 is disordered; sequence GNTTEESSELTGTPSFTEGA. A PCNA interacting protein (PIP) box motif is present at residues 395–402; that stretch reads QGNLLSFF. C463, H466, C489, and C503 together coordinate Zn(2+). A GRF-type zinc finger spans residues 463 to 512; sequence CKGHSEPCVLRTVKKAGPNCGRQFYVCARPEGHSSNPQARCNFFLWLTKK.

Belongs to the DNA repair enzymes AP/ExoA family. Interacts (via PIP box and GRF-type Zinc finger domain) with pcna; the interaction is required for 3 -5 SSB end resection, assembly of a checkpoint protein complex to SSB sites, and SSB signaling. Interacts with chek1. The cofactor is Mg(2+). Requires Mn(2+) as cofactor. As to expression, expressed in eggs (at protein level).

Its subcellular location is the nucleus. The protein localises to the chromosome. It localises to the cytoplasm. The protein resides in the mitochondrion. It catalyses the reaction Exonucleolytic cleavage in the 3'- to 5'-direction to yield nucleoside 5'-phosphates.. With respect to regulation, 3'-5' nuclease activity is stimulated in presence of pcna. Functionally, functions as a weak apurinic/apyrimidinic (AP) endodeoxyribonuclease in the DNA base excision repair (BER) pathway of DNA lesions induced by oxidative and alkylating agents. Initiates repair of AP sites in DNA by catalyzing hydrolytic incision of the phosphodiester backbone immediately adjacent to the damage, generating a single-strand break with 5'-deoxyribose phosphate and 3'-hydroxyl ends. Exhibits 3'-5' exonuclease activity on a 3' DNA substrate; nuclease activity is stimulated by interaction with pcna. Has a preference for the 3' recessed ends over blunt-ended substrates, in both the presence and the absence of pcna. Generates single-stranded DNA (ssDNA) via 3'-5' single-strand break (SSB) end resection, thereby promoting a DNA damage response via replication protein A (rpa2)-binding to ssDNA and the recruitment of a checkpoint protein complex, including atr, atr-interacting protein atrip, and rad9, to damage sites following oxidative stress. Plays a role in reversing blocked 3' DNA ends, problematic lesions that preclude DNA synthesis. Required for chek1 phosphorylation induced by hydrogen peroxide but not by stalled replication forks. The polypeptide is DNA-(apurinic or apyrimidinic site) endonuclease 2 (Xenopus laevis (African clawed frog)).